Consider the following 209-residue polypeptide: Small ribosomal subunit protein uS5 (209 aa).

Residues 1–11 (MTQPNTQTTPN) show a composition bias toward polar residues. The interval 1-55 (MTQPNTQTTPNDVPAAAEGQQEQQQQQRRGGGRERRGGGRRGDRRGQERDSEWQE) is disordered. Residues 18 to 28 (EGQQEQQQQQR) are compositionally biased toward low complexity. Residues 31 to 55 (GGRERRGGGRRGDRRGQERDSEWQE) are compositionally biased toward basic and acidic residues. The region spanning 53–116 (WQERVVQIRR…ADGKKHLVKV (64 aa)) is the S5 DRBM domain.

It belongs to the universal ribosomal protein uS5 family. In terms of assembly, part of the 30S ribosomal subunit. Contacts proteins S4 and S8.

Its function is as follows. With S4 and S12 plays an important role in translational accuracy. Functionally, located at the back of the 30S subunit body where it stabilizes the conformation of the head with respect to the body. This chain is Small ribosomal subunit protein uS5, found in Prochlorococcus marinus (strain MIT 9313).